The chain runs to 494 residues: Ankyrin repeat domain-containing protein 33B (494 aa).

Residues 1-80 (MVLLAGTGPE…SAESVPEGVP (80 aa)) form a disordered region. Over residues 30-42 (VEEDPADYEEFED) the composition is skewed to acidic residues. ANK repeat units lie at residues 84-113 (PETATLLRAACANNVGLLRTLVRRGVSVEE), 120-150 (NGRTGLIVACYHGFVDTVVALAECPHVDVNW), 154-183 (EGNTALITAAQAGHAIITNYLLNYFPGLDL), 189-218 (FGFTALMKAAMQGRTDCIRALMLAGADVHA), and 223-255 (RGMSPQEWATYTGRVDAVRLMQRLLERPCPEQF). Residues 349-494 (RAARGPQAQE…RRTAPWKKRT (146 aa)) are disordered. A compositionally biased stretch (basic and acidic residues) spans 371–382 (TGQEDADSREGS). At S405 the chain carries Phosphoserine. Basic and acidic residues-rich tracts occupy residues 440–451 (RPARKGSTKDSG) and 459–487 (RYKEAKEEKRKAEEAEKKRQAEAQKERRT). A coiled-coil region spans residues 459–488 (RYKEAKEEKRKAEEAEKKRQAEAQKERRTA).

The chain is Ankyrin repeat domain-containing protein 33B (ANKRD33B) from Homo sapiens (Human).